We begin with the raw amino-acid sequence, 954 residues long: Regulatory protein FlaEY (954 aa).

Functionally, functions in trans to modulate the level of transcription of the flagellin genes and several genes encoding chemotaxis functions. It is itself temporally controlled. This Caulobacter vibrioides (strain ATCC 19089 / CIP 103742 / CB 15) (Caulobacter crescentus) protein is Regulatory protein FlaEY (flaEY).